The following is a 400-amino-acid chain: NADH-ubiquinone oxidoreductase 49 kDa subunit (400 aa).

The protein belongs to the complex I 49 kDa subunit family.

It localises to the mitochondrion. The catalysed reaction is a ubiquinone + NADH + 5 H(+)(in) = a ubiquinol + NAD(+) + 4 H(+)(out). Functionally, core subunit of the mitochondrial membrane respiratory chain NADH dehydrogenase (Complex I) that is believed to belong to the minimal assembly required for catalysis. Complex I functions in the transfer of electrons from NADH to the respiratory chain. The immediate electron acceptor for the enzyme is believed to be ubiquinone. Component of the iron-sulfur (IP) fragment of the enzyme. Component of the iron-sulfur (IP) fragment of the enzyme. This is NADH-ubiquinone oxidoreductase 49 kDa subunit (NAD7) from Paramecium tetraurelia.